The sequence spans 149 residues: UPAR/Ly6 domain-containing protein bou (149 aa).

The first 31 residues, 1-31, serve as a signal peptide directing secretion; it reads MWPPKHAHIGWLSSLALVVLLMSLQMVMVSG. The Extracellular portion of the chain corresponds to 32–126; the sequence is IECYVCDTSD…YTCDTDGCNA (95 aa). Disulfide bonds link Cys-34–Cys-74, Cys-37–Cys-48, Cys-65–Cys-91, Cys-100–Cys-115, and Cys-119–Cys-124. N-linked (GlcNAc...) asparagine glycosylation is present at Asn-64. A lipid anchor (GPI-anchor amidated asparagine) is attached at Asn-125. Positions 126-149 are cleaved as a propeptide — removed in mature form; the sequence is AAGRLELEWGVAAALLTLTWLLRH. The chain crosses the membrane as a helical span at residues 127–147; sequence AGRLELEWGVAAALLTLTWLL. Topologically, residues 148–149 are cytoplasmic; it reads RH.

GPI-anchored.

It is found in the cell membrane. Its subcellular location is the cell junction. The protein localises to the septate junction. The protein resides in the cytoplasm. It localises to the cell cortex. It is found in the secreted. Its subcellular location is the apicolateral cell membrane. Functionally, involved in tracheal paracellular barrier functions mediated by epithelial cell septate junctions. Involved in paracellular barrier functions mediated by glial cell septate junctions in the peripheral nervous system, including the chordotonal organs, but not the hemolymph-brain barrier (the insect blood-brain barrier) of the central nervous system. Required for septate junction assembly, possibly by organizing the preassembly and transport of septate junction proteins such as dlg1/disks large 1, Nrx-IV/Neurexin-IV and the claudin protein kune. Involved in chitin fiber organization during tracheal development. Secreted, possibly in association with extracellular vesicles, to act non-autonomously on tissues distant from its site of expression. The polypeptide is UPAR/Ly6 domain-containing protein bou (Drosophila melanogaster (Fruit fly)).